The primary structure comprises 963 residues: Ras-interacting protein 1 (963 aa).

A compositionally biased stretch (basic and acidic residues) spans Met1–Gly10. 2 disordered regions span residues Met1 to Gly22 and Leu35 to Trp118. A compositionally biased stretch (low complexity) spans Ser41–Ser57. Arg94 is subject to Omega-N-methylarginine. Positions Ser96–Gly113 are enriched in gly residues. Residues Pro144–Glu259 enclose the Ras-associating domain. Ser188, Ser280, and Ser292 each carry phosphoserine. The interval Ala267–Ala356 is disordered. The span at Ala290–Gly301 shows a compositional bias: low complexity. A compositionally biased stretch (gly residues) spans Pro302–Gly313. Residues Asn320–Gln333 show a composition bias toward low complexity. Phosphoserine occurs at positions 326, 328, 331, and 419. Residues Gly600–Thr897 form the Dilute domain.

In terms of assembly, interacts with Ras family members that have been activated by GTP binding. Interacts with HRAS, RAP1A, RAP2, RRAS, RAF1 and RRAS2. Interacts with MYH9 and ARHGAP29. As to expression, highly expressed in heart. Detected at lower levels in placenta and pancreas.

The protein localises to the cytoplasm. It is found in the perinuclear region. The protein resides in the golgi apparatus. It localises to the golgi stack. Required for the proper formation of vascular structures that develop via both vasculogenesis and angiogenesis. Acts as a critical and vascular-specific regulator of GTPase signaling, cell architecture, and adhesion, which is essential for endothelial cell morphogenesis and blood vessel tubulogenesis. Regulates the activity of Rho GTPases in part by recruiting ARHGAP29 and suppressing RhoA signaling and dampening ROCK and MYH9 activities in endothelial cells. May act as effector for Golgi-bound HRAS and other Ras-like proteins. May promote HRAS-mediated transformation. Negative regulator of amino acid starvation-induced autophagy. This chain is Ras-interacting protein 1 (RASIP1), found in Homo sapiens (Human).